The chain runs to 186 residues: Cytochrome c oxidase polypeptide 5, mitochondrial (186 aa).

The N-terminal 20 residues, methionine 1 to asparagine 20, are a transit peptide targeting the mitochondrion. The Mitochondrial matrix portion of the chain corresponds to alanine 21–glutamine 107. A helical transmembrane segment spans residues lysine 108–isoleucine 128. The Mitochondrial intermembrane segment spans residues arginine 129–lysine 186. The interval glutamate 149–lysine 186 is disordered.

It belongs to the cytochrome c oxidase IV family. In terms of assembly, component of the cytochrome c oxidase (complex IV, CIV), a multisubunit enzyme composed of a catalytic core of 3 subunits and seevral supernumerary subunits. The complex exists as a monomer or a dimer and forms supercomplexes (SCs) in the inner mitochondrial membrane with ubiquinol-cytochrome c oxidoreductase (cytochrome b-c1 complex, complex III, CIII).

It localises to the mitochondrion inner membrane. Its pathway is energy metabolism; oxidative phosphorylation. In terms of biological role, component of the cytochrome c oxidase, the last enzyme in the mitochondrial electron transport chain which drives oxidative phosphorylation. The respiratory chain contains 3 multisubunit complexes succinate dehydrogenase (complex II, CII), ubiquinol-cytochrome c oxidoreductase (cytochrome b-c1 complex, complex III, CIII) and cytochrome c oxidase (complex IV, CIV), that cooperate to transfer electrons derived from NADH and succinate to molecular oxygen, creating an electrochemical gradient over the inner membrane that drives transmembrane transport and the ATP synthase. Cytochrome c oxidase is the component of the respiratory chain that catalyzes the reduction of oxygen to water. Electrons originating from reduced cytochrome c in the intermembrane space (IMS) are transferred via the dinuclear copper A center (CU(A)) of subunit 2 and heme A of subunit 1 to the active site in subunit 1, a binuclear center (BNC) formed by heme A3 and copper B (CU(B)). The BNC reduces molecular oxygen to 2 water molecules using 4 electrons from cytochrome c in the IMS and 4 protons from the mitochondrial matrix. The chain is Cytochrome c oxidase polypeptide 5, mitochondrial (cox5) from Schizosaccharomyces pombe (strain 972 / ATCC 24843) (Fission yeast).